The sequence spans 154 residues: Sperm microtubule associated protein 1 (154 aa).

The sequence is that of Sperm microtubule associated protein 1 from Homo sapiens (Human).